Here is a 385-residue protein sequence, read N- to C-terminus: UPF0284 protein P9301_04631 (385 aa).

This sequence belongs to the UPF0284 family.

In Prochlorococcus marinus (strain MIT 9301), this protein is UPF0284 protein P9301_04631.